Consider the following 410-residue polypeptide: Multifunctional CCA protein (410 aa).

Glycine 8 and arginine 11 together coordinate ATP. 2 residues coordinate CTP: glycine 8 and arginine 11. Mg(2+)-binding residues include aspartate 21 and aspartate 23. 3 residues coordinate ATP: arginine 91, arginine 137, and arginine 140. Arginine 91, arginine 137, and arginine 140 together coordinate CTP. Positions 228-329 (TGVHVLSVLQ…LELLQSFDVY (102 aa)) constitute an HD domain.

Belongs to the tRNA nucleotidyltransferase/poly(A) polymerase family. Bacterial CCA-adding enzyme type 1 subfamily. In terms of assembly, monomer. Can also form homodimers and oligomers. The cofactor is Mg(2+). It depends on Ni(2+) as a cofactor.

The catalysed reaction is a tRNA precursor + 2 CTP + ATP = a tRNA with a 3' CCA end + 3 diphosphate. The enzyme catalyses a tRNA with a 3' CCA end + 2 CTP + ATP = a tRNA with a 3' CCACCA end + 3 diphosphate. Catalyzes the addition and repair of the essential 3'-terminal CCA sequence in tRNAs without using a nucleic acid template. Adds these three nucleotides in the order of C, C, and A to the tRNA nucleotide-73, using CTP and ATP as substrates and producing inorganic pyrophosphate. tRNA 3'-terminal CCA addition is required both for tRNA processing and repair. Also involved in tRNA surveillance by mediating tandem CCA addition to generate a CCACCA at the 3' terminus of unstable tRNAs. While stable tRNAs receive only 3'-terminal CCA, unstable tRNAs are marked with CCACCA and rapidly degraded. The protein is Multifunctional CCA protein of Pseudomonas aeruginosa (strain ATCC 15692 / DSM 22644 / CIP 104116 / JCM 14847 / LMG 12228 / 1C / PRS 101 / PAO1).